The primary structure comprises 304 residues: tRNA dimethylallyltransferase (304 aa).

ATP is bound at residue 8–15; sequence GPTASGKS. A substrate-binding site is contributed by 10 to 15; it reads TASGKS. An interaction with substrate tRNA region spans residues 33 to 36; sequence DSRQ.

It belongs to the IPP transferase family. As to quaternary structure, monomer. It depends on Mg(2+) as a cofactor.

It catalyses the reaction adenosine(37) in tRNA + dimethylallyl diphosphate = N(6)-dimethylallyladenosine(37) in tRNA + diphosphate. Its function is as follows. Catalyzes the transfer of a dimethylallyl group onto the adenine at position 37 in tRNAs that read codons beginning with uridine, leading to the formation of N6-(dimethylallyl)adenosine (i(6)A). The chain is tRNA dimethylallyltransferase from Chlorobium luteolum (strain DSM 273 / BCRC 81028 / 2530) (Pelodictyon luteolum).